A 612-amino-acid chain; its full sequence is Chaperone protein DnaK (612 aa).

Thr-173 bears the Phosphothreonine; by autocatalysis mark. Over residues 524 to 544 (DDKVSEEDKQKAESAKDELKQ) the composition is skewed to basic and acidic residues. 2 disordered regions span residues 524–560 (DDKV…KKDA) and 572–612 (LYEQ…DDKK). Positions 574-586 (EQVQQEAQQASGE) are enriched in low complexity. Over residues 587 to 612 (QGEESGNQDDDVVDADYSEVDDDDKK) the composition is skewed to acidic residues.

Belongs to the heat shock protein 70 family.

Its function is as follows. Acts as a chaperone. The polypeptide is Chaperone protein DnaK (Oceanobacillus iheyensis (strain DSM 14371 / CIP 107618 / JCM 11309 / KCTC 3954 / HTE831)).